The sequence spans 276 residues: Ribosomal RNA small subunit methyltransferase J (276 aa).

Residues E135–R136 and D191 each bind S-adenosyl-L-methionine.

This sequence belongs to the methyltransferase superfamily. RsmJ family.

The protein resides in the cytoplasm. It carries out the reaction guanosine(1516) in 16S rRNA + S-adenosyl-L-methionine = N(2)-methylguanosine(1516) in 16S rRNA + S-adenosyl-L-homocysteine + H(+). In terms of biological role, specifically methylates the guanosine in position 1516 of 16S rRNA. The chain is Ribosomal RNA small subunit methyltransferase J from Hydrogenovibrio crunogenus (strain DSM 25203 / XCL-2) (Thiomicrospira crunogena).